Here is a 366-residue protein sequence, read N- to C-terminus: tRNA/tmRNA (uracil-C(5))-methyltransferase (366 aa).

S-adenosyl-L-methionine-binding residues include Gln190, Tyr218, Asn223, Glu239, and Asp299. The Nucleophile role is filled by Cys324. Residue Glu358 is the Proton acceptor of the active site.

Belongs to the class I-like SAM-binding methyltransferase superfamily. RNA M5U methyltransferase family. TrmA subfamily.

The enzyme catalyses uridine(54) in tRNA + S-adenosyl-L-methionine = 5-methyluridine(54) in tRNA + S-adenosyl-L-homocysteine + H(+). The catalysed reaction is uridine(341) in tmRNA + S-adenosyl-L-methionine = 5-methyluridine(341) in tmRNA + S-adenosyl-L-homocysteine + H(+). Dual-specificity methyltransferase that catalyzes the formation of 5-methyluridine at position 54 (m5U54) in all tRNAs, and that of position 341 (m5U341) in tmRNA (transfer-mRNA). In Escherichia coli O127:H6 (strain E2348/69 / EPEC), this protein is tRNA/tmRNA (uracil-C(5))-methyltransferase.